Consider the following 888-residue polypeptide: Microtubule-associated protein 10 (888 aa).

Disordered stretches follow at residues 398 to 454, 508 to 602, 620 to 642, 654 to 683, and 699 to 836; these read EHKG…VTKG, SLAA…TSLR, NILRGKWKKQVQSPGLSRQDPAV, QVKAASAADTNENRPPSRKSSCESTSELQC, and TENN…YEPS. Positions 524 to 541 are enriched in polar residues; sequence LTDSNGKVSSWAVQSQLP. Residues 572 to 589 are compositionally biased toward basic and acidic residues; the sequence is ESSRTREAKQSHAMKKET. Residues 590–600 show a composition bias toward polar residues; the sequence is VGQSENKTVTS. Polar residues-rich tracts occupy residues 661-683, 699-714, 722-745, 772-786, and 825-836; these read ADTNENRPPSRKSSCESTSELQC, TENNSRSLPAPDSSTG, SWASKSSEARLSTRKNSSESSSVF, EASSLSTSDFSSQWT, and ARTSQVSSYEPS.

In terms of assembly, interacts (via middle region) with microtubules.

It is found in the cytoplasm. The protein resides in the cytoskeleton. The protein localises to the spindle pole. Its subcellular location is the microtubule organizing center. It localises to the centrosome. It is found in the midbody. Microtubule-associated protein (MAP) that plays a role in the regulation of cell division; promotes microtubule stability and participates in the organization of the spindle midzone and normal progress of cytokinesis. The chain is Microtubule-associated protein 10 (Map10) from Rattus norvegicus (Rat).